The sequence spans 382 residues: Galactokinase (382 aa).

34-37 (EHTD) serves as a coordination point for substrate. 124 to 130 (GAGLSSS) lines the ATP pocket. Mg(2+) contacts are provided by Ser130 and Glu162. Asp174 functions as the Proton acceptor in the catalytic mechanism. Tyr223 contacts substrate.

It belongs to the GHMP kinase family. GalK subfamily.

It localises to the cytoplasm. It carries out the reaction alpha-D-galactose + ATP = alpha-D-galactose 1-phosphate + ADP + H(+). It functions in the pathway carbohydrate metabolism; galactose metabolism. Catalyzes the transfer of the gamma-phosphate of ATP to D-galactose to form alpha-D-galactose-1-phosphate (Gal-1-P). This is Galactokinase from Escherichia coli O7:K1 (strain IAI39 / ExPEC).